A 443-amino-acid polypeptide reads, in one-letter code: Endothelin receptor type B (443 aa).

The first 26 residues, 1–26, serve as a signal peptide directing secretion; sequence MQPLPTLCGRVLVALILACGVAGVQG. Topologically, residues 27-102 are extracellular; sequence EERRFPPARA…RTIEIKETFK (76 aa). Residues 51–62 show a composition bias toward polar residues; sequence TKTSWPTGSNAS. The disordered stretch occupies residues 51 to 89; the sequence is TKTSWPTGSNASVPRLSAPPQMPKAGRTAGAQRRTLPPP. N-linked (GlcNAc...) asparagine glycosylation is present at asparagine 60. A helical transmembrane segment spans residues 103 to 127; it reads YINTVVSCLVFVLGIIGNSTLLRII. Residues 128–138 are Cytoplasmic-facing; the sequence is YKNKCMRNGPN. Residues 139-164 form a helical membrane-spanning segment; the sequence is ILIASLALGDLLHIIIDIPINVYKLL. Topologically, residues 165–176 are extracellular; that stretch reads AEDWPFGVEMCK. Cysteine 175 and cysteine 256 are joined by a disulfide. A helical transmembrane segment spans residues 177–198; the sequence is LVPFIQKASVGITVLSLCALSI. Residues 199–219 are Cytoplasmic-facing; that stretch reads DRYRAVASWSRIKGIGVPKWT. The helical transmembrane segment at 220-244 threads the bilayer; the sequence is AVEIVLIWVVSVVLAVPEAVGFDMI. Topologically, residues 245–272 are extracellular; it reads TADYKGSYLRICLLHPTQKTAFMQFYKN. A helical transmembrane segment spans residues 273–297; the sequence is AKDWWLFSFYFCLPLAITAFFYTLE. The Cytoplasmic segment spans residues 298–325; that stretch reads TCEMLRKKSGMQIALNDHLKQRREVAKT. Serine 306 is subject to Phosphoserine. Residues 326–351 traverse the membrane as a helical segment; that stretch reads VFCLVLVFALCWLPLHLSRILKHTLY. Topologically, residues 352 to 363 are extracellular; it reads DQNDPHRCELLS. Residues 364-390 traverse the membrane as a helical segment; sequence FLLVLEYIGINMASLNSCINPIALYLV. The Cytoplasmic portion of the chain corresponds to 391 to 443; it reads SKRFKNCFKWCLCCWCQSFEEKQSLEDKQSCLKFKANDHGYDNFRSSNKYSSS. Residues cysteine 403, cysteine 404, and cysteine 406 are each lipidated (S-palmitoyl cysteine). Serine 420 carries the phosphoserine modification. Tyrosine 440 is modified (phosphotyrosine). Residues serine 441, serine 442, and serine 443 each carry the phosphoserine modification.

Belongs to the G-protein coupled receptor 1 family. Endothelin receptor subfamily. EDNRB sub-subfamily.

Its subcellular location is the cell membrane. Functionally, non-specific receptor for endothelin 1, 2, and 3. Mediates its action by association with G proteins that activate a phosphatidylinositol-calcium second messenger system. The polypeptide is Endothelin receptor type B (EDNRB) (Equus caballus (Horse)).